The following is a 359-amino-acid chain: 4'-phosphopantetheinyl transferase A (359 aa).

It belongs to the P-Pant transferase superfamily.

It carries out the reaction apo-[ACP] + CoA = holo-[ACP] + adenosine 3',5'-bisphosphate + H(+). Its activity is regulated as follows. Activity is inhibited bythe antifunfal copmpounds PD 404,182, 6-nitroso-1,2-benzopyrone, and calmidazolium chloride with IC(50) values of 3.9 uM, 35.2 uM, and 19.2 uM, respectively. In terms of biological role, acyl-carrier-protein synthase that transfers the 4'-phosphopantetheine moiety from coenzyme A to a Ser of an acyl-carrier-protein. The 4'-phosphopantetheine (4'-PPT) portion of CoA provides the essential prosthetic group for a number of carrier proteins and multi-domain enzymes, priming them for the acceptance of acyl building blocks in fatty acid synthesis and many aspects of secondary metabolism mediated by polyketide synthases (PKSs) and non-ribosomal peptide synthetases (NRPSs). PptA is able to transfer the cofactor to a broad range of enzymes with acyl- or peptidyl-carrier protein domains and activates target enzymes involved in the synthesis of lysine, but also secondary metabolites including gliotoxin, fumigaclavine C, fumiquinazole A, fumiquinazoline C, pyripyroprene A, fumagillin, the siderophores triacetylfusarinine C (TAFC) and ferricrocin (FC), and dihydroxy naphthalene (DHN)-melanin. Plays an essential role in virulence. This is 4'-phosphopantetheinyl transferase A from Aspergillus fumigatus (strain ATCC MYA-4609 / CBS 101355 / FGSC A1100 / Af293) (Neosartorya fumigata).